The sequence spans 87 residues: U3-theraphotoxin-Hhn1a 10 (87 aa).

The N-terminal stretch at 1–24 (MVNMEASMFLTFAGLVLLFVVCYA) is a signal peptide. A propeptide spanning residues 25 to 52 (SESEEKEFPKEMLSSIFAVDNDFKQEER) is cleaved from the precursor. Cystine bridges form between C54-C67, C61-C72, and C66-C79.

This sequence belongs to the neurotoxin 10 (Hwtx-1) family. 51 (Hntx-8) subfamily. Hntx-8 sub-subfamily. Expressed by the venom gland.

It localises to the secreted. Ion channel inhibitor. The chain is U3-theraphotoxin-Hhn1a 10 from Cyriopagopus hainanus (Chinese bird spider).